A 197-amino-acid chain; its full sequence is uncharacterized protein (197 aa).

In terms of domain architecture, PfpI endopeptidase spans 29 to 166 (DWSVHTVSLD…FTNLILEMID (138 aa)). The active-site Nucleophile is Cys98.

This sequence belongs to the peptidase C56 family.

This is an uncharacterized protein from Bacillus subtilis (strain 168).